The primary structure comprises 454 residues: Probable succinate-semialdehyde dehydrogenase [NADP(+)] (454 aa).

NADP(+) contacts are provided by residues 130 to 131 (WN), 154 to 157 (KHAS), and 206 to 207 (GS). The active-site Proton acceptor is E228. L229 serves as a coordination point for NADP(+). The active-site Nucleophile is C262. E359 contacts NADP(+).

It belongs to the aldehyde dehydrogenase family.

The catalysed reaction is succinate semialdehyde + NADP(+) + H2O = succinate + NADPH + 2 H(+). The protein operates within amino-acid degradation; 4-aminobutanoate degradation. Its function is as follows. Catalyzes the NADP(+) dependent oxidation of succinate semialdehyde to succinate. The chain is Probable succinate-semialdehyde dehydrogenase [NADP(+)] (gabD) from Synechocystis sp. (strain ATCC 27184 / PCC 6803 / Kazusa).